Here is a 235-residue protein sequence, read N- to C-terminus: tRNA (guanine-N(1)-)-methyltransferase (235 aa).

Residues glycine 114 and 134–139 (IGDYIL) each bind S-adenosyl-L-methionine.

The protein belongs to the RNA methyltransferase TrmD family. In terms of assembly, homodimer.

It localises to the cytoplasm. The enzyme catalyses guanosine(37) in tRNA + S-adenosyl-L-methionine = N(1)-methylguanosine(37) in tRNA + S-adenosyl-L-homocysteine + H(+). In terms of biological role, specifically methylates guanosine-37 in various tRNAs. In Ehrlichia ruminantium (strain Welgevonden), this protein is tRNA (guanine-N(1)-)-methyltransferase.